Consider the following 473-residue polypeptide: Glycine--tRNA ligase (473 aa).

Positions 101 and 172 each coordinate substrate. Residues 204-206, 214-219, 289-290, and 333-336 contribute to the ATP site; these read RNE, FRTREF, EL, and GVER. Substrate is bound at residue 219 to 223; sequence FEQME. 329–333 is a substrate binding site; it reads EPSVG.

Belongs to the class-II aminoacyl-tRNA synthetase family. In terms of assembly, homodimer.

It localises to the cytoplasm. The enzyme catalyses tRNA(Gly) + glycine + ATP = glycyl-tRNA(Gly) + AMP + diphosphate. Catalyzes the attachment of glycine to tRNA(Gly). In Ureaplasma urealyticum serovar 10 (strain ATCC 33699 / Western), this protein is Glycine--tRNA ligase.